The chain runs to 588 residues: Hyaluronan synthase 1 (588 aa).

Residues 1–28 (MKEKAAETMEIPEGIPKDLEPKHPTLWR) lie on the Cytoplasmic side of the membrane. The chain crosses the membrane as a helical span at residues 29-49 (IIYYSFGVVLLATITAAYVAE). The Extracellular portion of the chain corresponds to 50-61 (FQVLKHEAILFS). The chain crosses the membrane as a helical span at residues 62-82 (LGLYGLAMLLHLMMQSLFAFL). At 83–411 (EIRRVNKSEL…IWMTYESVVS (329 aa)) the chain is on the cytoplasmic side. The chain crosses the membrane as a helical span at residues 412 to 432 (FIFPFFITATVIRLIYAGTIW). Residue N433 is a topological domain, extracellular. A helical transmembrane segment spans residues 434 to 454 (VVWLLLCIQIMSLFKSIYACW). Residues 455-456 (LR) lie on the Cytoplasmic side of the membrane. Residues 457 to 477 (GNFIMLLMSLYSMLYMTGLLP) form a helical membrane-spanning segment. Over 478–505 (SKYFALLTLNKTGWGTSGRKKIVGNYMP) the chain is Extracellular. The chain crosses the membrane as a helical span at residues 506–526 (ILPLSIWAAVLCGGVGYSIYM). Topologically, residues 527-543 (DCQNDWSTPEKQKEMYH) are cytoplasmic. A helical transmembrane segment spans residues 544 to 564 (LLYGCVGYVMYWVIMAVMYWV). Residues 565-588 (WVKRCCRKRSQTVTLVHDIPDMCV) lie on the Extracellular side of the membrane.

Belongs to the NodC/HAS family. Mg(2+) is required as a cofactor. Expression moves as a gradient through the embryo. The mRNA is first expressed in the animal region of the blastula, and by early gastrula is found everywhere except in the outer layer of the dorsal blastopore lip. By mid-gastrula, protein is present in the inner ectodermal layer and the endoderm, then disappears from dorsal ectoderm as the neural plate is induced and later decays in a dorsoventral direction. Last expressed in ventral regions of the gut at the tailbud stage (at protein level).

It localises to the membrane. The enzyme catalyses [hyaluronan](n) + UDP-N-acetyl-alpha-D-glucosamine = N-acetyl-beta-D-glucosaminyl-(1-&gt;4)-[hyaluronan](n) + UDP + H(+). The catalysed reaction is N-acetyl-beta-D-glucosaminyl-(1-&gt;4)-[hyaluronan](n) + UDP-alpha-D-glucuronate = [hyaluronan](n+1) + UDP + H(+). Its pathway is glycan biosynthesis; hyaluronan biosynthesis. Functionally, catalyzes the addition of GlcNAc or GlcUA monosaccharides to the nascent hyaluronan polymer. Therefore, it is essential to hyaluronan synthesis a major component of most extracellular matrices that has a structural role in tissues architectures and regulates cell adhesion, migration and differentiation. Also able to catalyze the synthesis of chito-oligosaccharide depending on the substrate. This chain is Hyaluronan synthase 1 (has1), found in Xenopus laevis (African clawed frog).